Consider the following 159-residue polypeptide: C-type lectin BJcuL (159 aa).

The signal sequence occupies residues 1 to 24; it reads MGRFLFVASSACWFVFLSLSGAKG. 4 cysteine pairs are disulfide-bonded: C27–C38, C55–C155, C62–C157, and C130–C147. Positions 34–156 constitute a C-type lectin domain; it reads MNGLCYKIFN…CESKNAFLCQ (123 aa). Ca(2+) is bound by residues Q120, D122, E128, N143, and D144. The Galactose-binding signature appears at 120 to 122; that stretch reads QPD.

The protein belongs to the true venom lectin family. Homodecamer of disulfide-linked dimers arranged in two 5-fold symmetric pentamers. Binds the gentamicin group of aminoglycoside antibiotics at the dimeric interface near the intermolecular disulfide bond. As to expression, expressed by the venom gland.

It localises to the secreted. Its activity is regulated as follows. Hemagglutination activity is inhibited by lactose (MIC=2.5 mM), galactose (MIC=10 mM), and raffinose. Is very weakly or not inhibited by gentamicin, kanamycin, glucose and sucrose. Functionally, galactose-binding lectin which recognizes specific carbohydrate structures and agglutinates a variety of animal cells by binding to cell-surface glycoproteins and glycolipids. Calcium-dependent lectin. Also binds lactose and raffinose. Shows high hemagglutinating activity on mammalian erythrocytes. It also involved in immunological functions, since it is able of inducing potent neutrophil activation. In vivo, it causes edema and increases vascular permeability after injection into mouse hind paws (10-100 ug/paw). In anesthetized rats, it decreases the blood pressure by approximately 15%, with a rapid return to the resting level. Is an effective inhibitor of cell growth in some cancer cell lines, especially against renal and pancreatic cancer cell lines, human breast and ovarian carcinoma, glioblastoma and a bovine brain microvascular endothelial cell line. The polypeptide is C-type lectin BJcuL (Bothrops jararacussu (Jararacussu)).